The sequence spans 339 residues: Ketol-acid reductoisomerase (NADP(+)) (339 aa).

The region spanning M1 to T182 is the KARI N-terminal Rossmann domain. Residues Y24–Q27, R48, S51, T53, and D83–Q86 contribute to the NADP(+) site. H108 is a catalytic residue. G134 is a binding site for NADP(+). The KARI C-terminal knotted domain maps to T183–I328. Residues D191, E195, E227, and E231 each contribute to the Mg(2+) site. S252 contacts substrate.

The protein belongs to the ketol-acid reductoisomerase family. Mg(2+) is required as a cofactor.

It carries out the reaction (2R)-2,3-dihydroxy-3-methylbutanoate + NADP(+) = (2S)-2-acetolactate + NADPH + H(+). The enzyme catalyses (2R,3R)-2,3-dihydroxy-3-methylpentanoate + NADP(+) = (S)-2-ethyl-2-hydroxy-3-oxobutanoate + NADPH + H(+). Its pathway is amino-acid biosynthesis; L-isoleucine biosynthesis; L-isoleucine from 2-oxobutanoate: step 2/4. The protein operates within amino-acid biosynthesis; L-valine biosynthesis; L-valine from pyruvate: step 2/4. Involved in the biosynthesis of branched-chain amino acids (BCAA). Catalyzes an alkyl-migration followed by a ketol-acid reduction of (S)-2-acetolactate (S2AL) to yield (R)-2,3-dihydroxy-isovalerate. In the isomerase reaction, S2AL is rearranged via a Mg-dependent methyl migration to produce 3-hydroxy-3-methyl-2-ketobutyrate (HMKB). In the reductase reaction, this 2-ketoacid undergoes a metal-dependent reduction by NADPH to yield (R)-2,3-dihydroxy-isovalerate. The sequence is that of Ketol-acid reductoisomerase (NADP(+)) from Rhizorhabdus wittichii (strain DSM 6014 / CCUG 31198 / JCM 15750 / NBRC 105917 / EY 4224 / RW1) (Sphingomonas wittichii).